The following is a 464-amino-acid chain: Protein FAM90A5 (464 aa).

Disordered stretches follow at residues 16 to 42 (RAQT…DPRL), 70 to 389 (PATL…HDGA), and 415 to 437 (HSPE…SEAP). Composition is skewed to basic and acidic residues over residues 74–89 (GKKE…KPRV) and 97–114 (NKDK…DPQR). Over residues 180-197 (LASLSPLRKASLSSSSSL) the composition is skewed to low complexity.

This sequence belongs to the FAM90 family.

This chain is Protein FAM90A5, found in Homo sapiens (Human).